The primary structure comprises 399 residues: Formate-dependent phosphoribosylglycinamide formyltransferase (399 aa).

Residues 22–23 (EL) and Glu82 each bind N(1)-(5-phospho-beta-D-ribosyl)glycinamide. ATP is bound by residues Arg115, Lys157, 162-167 (SSGKGQ), 197-200 (EAVV), and Glu205. Residues 120 to 315 (RLAAEELGLQ…EFELHARAIL (196 aa)) enclose the ATP-grasp domain. Mg(2+) is bound by residues Glu274 and Glu286. Residues Asp293, Lys362, and 369 to 370 (RR) each bind N(1)-(5-phospho-beta-D-ribosyl)glycinamide.

The protein belongs to the PurK/PurT family. In terms of assembly, homodimer.

The enzyme catalyses N(1)-(5-phospho-beta-D-ribosyl)glycinamide + formate + ATP = N(2)-formyl-N(1)-(5-phospho-beta-D-ribosyl)glycinamide + ADP + phosphate + H(+). The protein operates within purine metabolism; IMP biosynthesis via de novo pathway; N(2)-formyl-N(1)-(5-phospho-D-ribosyl)glycinamide from N(1)-(5-phospho-D-ribosyl)glycinamide (formate route): step 1/1. Functionally, involved in the de novo purine biosynthesis. Catalyzes the transfer of formate to 5-phospho-ribosyl-glycinamide (GAR), producing 5-phospho-ribosyl-N-formylglycinamide (FGAR). Formate is provided by PurU via hydrolysis of 10-formyl-tetrahydrofolate. The protein is Formate-dependent phosphoribosylglycinamide formyltransferase of Thioalkalivibrio sulfidiphilus (strain HL-EbGR7).